The following is a 227-amino-acid chain: NAD(P)H-quinone oxidoreductase subunit K, chloroplastic (227 aa).

Residues Cys43, Cys44, Cys108, and Cys139 each contribute to the [4Fe-4S] cluster site.

The protein belongs to the complex I 20 kDa subunit family. As to quaternary structure, NDH is composed of at least 16 different subunits, 5 of which are encoded in the nucleus. [4Fe-4S] cluster serves as cofactor.

It is found in the plastid. Its subcellular location is the chloroplast thylakoid membrane. It carries out the reaction a plastoquinone + NADH + (n+1) H(+)(in) = a plastoquinol + NAD(+) + n H(+)(out). The enzyme catalyses a plastoquinone + NADPH + (n+1) H(+)(in) = a plastoquinol + NADP(+) + n H(+)(out). Its function is as follows. NDH shuttles electrons from NAD(P)H:plastoquinone, via FMN and iron-sulfur (Fe-S) centers, to quinones in the photosynthetic chain and possibly in a chloroplast respiratory chain. It has NADH- and deamino-NADH-specific dehydrogenase activity, using ferricyanide or quinones as acceptors. The immediate electron acceptor for the enzyme in this species is believed to be plastoquinone. Couples the redox reaction to proton translocation, and thus conserves the redox energy in a proton gradient. The polypeptide is NAD(P)H-quinone oxidoreductase subunit K, chloroplastic (Pisum sativum (Garden pea)).